The following is a 249-amino-acid chain: Eukaryotic translation initiation factor 3 subunit K (249 aa).

In terms of domain architecture, PCI spans 46-222 (FDCYANLALL…VKVPSNKENE (177 aa)).

Belongs to the eIF-3 subunit K family. In terms of assembly, component of the eukaryotic translation initiation factor 3 (eIF-3) complex.

The protein resides in the cytoplasm. Functionally, component of the eukaryotic translation initiation factor 3 (eIF-3) complex, which is involved in protein synthesis of a specialized repertoire of mRNAs and, together with other initiation factors, stimulates binding of mRNA and methionyl-tRNAi to the 40S ribosome. The eIF-3 complex specifically targets and initiates translation of a subset of mRNAs involved in cell proliferation. This Aspergillus clavatus (strain ATCC 1007 / CBS 513.65 / DSM 816 / NCTC 3887 / NRRL 1 / QM 1276 / 107) protein is Eukaryotic translation initiation factor 3 subunit K.